The sequence spans 82 residues: MAADRAQNLQDTFLNHVRKTKTPLTIFLVNGVKLQGIVTWFDNFCLLLRRDGHSQLVYKHAISTIMPGAPIQLFEGGEDASA.

The Sm domain occupies 11–71 (DTFLNHVRKT…ISTIMPGAPI (61 aa)).

The protein belongs to the Hfq family. Homohexamer.

Functionally, RNA chaperone that binds small regulatory RNA (sRNAs) and mRNAs to facilitate mRNA translational regulation in response to envelope stress, environmental stress and changes in metabolite concentrations. Also binds with high specificity to tRNAs. This chain is RNA-binding protein Hfq, found in Bradyrhizobium sp. (strain BTAi1 / ATCC BAA-1182).